A 268-amino-acid chain; its full sequence is Glucosamine-6-phosphate deaminase (268 aa).

Catalysis depends on D72, which acts as the Proton acceptor; for enolization step. The For ring-opening step role is filled by D141. The Proton acceptor; for ring-opening step role is filled by H143. E148 acts as the For ring-opening step in catalysis.

The protein belongs to the glucosamine/galactosamine-6-phosphate isomerase family. NagB subfamily. In terms of assembly, homohexamer.

It carries out the reaction alpha-D-glucosamine 6-phosphate + H2O = beta-D-fructose 6-phosphate + NH4(+). Its pathway is amino-sugar metabolism; N-acetylneuraminate degradation; D-fructose 6-phosphate from N-acetylneuraminate: step 5/5. Allosterically activated by N-acetylglucosamine 6-phosphate (GlcNAc6P). Catalyzes the reversible isomerization-deamination of glucosamine 6-phosphate (GlcN6P) to form fructose 6-phosphate (Fru6P) and ammonium ion. The chain is Glucosamine-6-phosphate deaminase from Histophilus somni (strain 129Pt) (Haemophilus somnus).